The sequence spans 481 residues: Protein nucleotidyltransferase YdiU (481 aa).

ATP contacts are provided by glycine 87, glycine 89, arginine 90, lysine 110, aspartate 122, glycine 123, arginine 173, and arginine 180. Aspartate 249 acts as the Proton acceptor in catalysis. Residues asparagine 250 and aspartate 259 each coordinate Mg(2+). Aspartate 259 is an ATP binding site.

Belongs to the SELO family. The cofactor is Mg(2+). Mn(2+) serves as cofactor.

The catalysed reaction is L-seryl-[protein] + ATP = 3-O-(5'-adenylyl)-L-seryl-[protein] + diphosphate. The enzyme catalyses L-threonyl-[protein] + ATP = 3-O-(5'-adenylyl)-L-threonyl-[protein] + diphosphate. It catalyses the reaction L-tyrosyl-[protein] + ATP = O-(5'-adenylyl)-L-tyrosyl-[protein] + diphosphate. It carries out the reaction L-histidyl-[protein] + UTP = N(tele)-(5'-uridylyl)-L-histidyl-[protein] + diphosphate. The catalysed reaction is L-seryl-[protein] + UTP = O-(5'-uridylyl)-L-seryl-[protein] + diphosphate. The enzyme catalyses L-tyrosyl-[protein] + UTP = O-(5'-uridylyl)-L-tyrosyl-[protein] + diphosphate. Functionally, nucleotidyltransferase involved in the post-translational modification of proteins. It can catalyze the addition of adenosine monophosphate (AMP) or uridine monophosphate (UMP) to a protein, resulting in modifications known as AMPylation and UMPylation. This chain is Protein nucleotidyltransferase YdiU, found in Mycobacterium sp. (strain KMS).